Here is a 165-residue protein sequence, read N- to C-terminus: Heme oxygenase (165 aa).

This sequence belongs to the heme oxygenase family.

It carries out the reaction heme b + 3 reduced [NADPH--hemoprotein reductase] + 3 O2 = biliverdin IXalpha + CO + Fe(2+) + 3 oxidized [NADPH--hemoprotein reductase] + 3 H2O + H(+). Functionally, catalyzes the opening of the heme ring to form the open-chain tetrapyrrole biliverdin IX with the release of iron and carbon monoxide (CO). The chain is Heme oxygenase (bphO) from Xanthomonas campestris pv. campestris (strain 8004).